The sequence spans 475 residues: Ataxin-10 (475 aa).

An Omega-N-methylarginine modification is found at Arg10. 2 positions are modified to phosphoserine: Ser12 and Ser77. Residue Thr82 is modified to Phosphothreonine. Ser430 carries the post-translational modification Phosphoserine.

Belongs to the ataxin-10 family. Homooligomer. Interacts with GNB2. Interacts with IQCB1. Interacts with OGT. In terms of processing, polyubiquitinated. Phosphorylation at Ser-12 by AURKB promotes the association of ATXN10 with PLK1. Phosphorylation at Ser-77 and Thr-82 by PLK1 may play a role in the regulation of cytokinesis and may stimulate the proteasome-mediated degradation of ATXN10.

The protein resides in the cytoplasm. It localises to the perinuclear region. The protein localises to the midbody. Its subcellular location is the cytoskeleton. It is found in the cilium basal body. The protein resides in the microtubule organizing center. It localises to the centrosome. The protein localises to the centriole. In terms of biological role, may play a role in the regulation of cytokinesis. May play a role in signaling by stimulating protein glycosylation. Induces neuritogenesis by activating the Ras-MAP kinase pathway and is necessary for the survival of cerebellar neurons. Does not appear to play a major role in ciliogenesis. The sequence is that of Ataxin-10 (ATXN10) from Macaca fascicularis (Crab-eating macaque).